The sequence spans 185 residues: Ribosome-recycling factor (185 aa).

It belongs to the RRF family.

It is found in the cytoplasm. Its function is as follows. Responsible for the release of ribosomes from messenger RNA at the termination of protein biosynthesis. May increase the efficiency of translation by recycling ribosomes from one round of translation to another. The polypeptide is Ribosome-recycling factor (Novosphingobium aromaticivorans (strain ATCC 700278 / DSM 12444 / CCUG 56034 / CIP 105152 / NBRC 16084 / F199)).